Reading from the N-terminus, the 417-residue chain is RH-like protein (417 aa).

The next 11 helical transmembrane spans lie at 12-32, 44-64, 77-97, 125-145, 172-192, 203-223, 238-258, 265-285, 287-307, 331-351, and 358-378; these read CLPL…FFFT, LVAS…GLGF, VAFN…LDGF, ISMN…MELV, IHVF…KPLP, TSPS…WPTF, VFST…VSSL, INMT…SASC, VIHS…ISIG, TFGL…ALRV, and MIGF…AMSI.

The protein belongs to the ammonium transporter (TC 2.A.49) family. Rh subfamily.

It is found in the membrane. In terms of biological role, may be part of an oligomeric complex which is likely to have a transport or channel function in the erythrocyte membrane. This Macaca mulatta (Rhesus macaque) protein is RH-like protein.